The primary structure comprises 412 residues: MSYITKQDKVIAEAIEREFQRQNSNIELIASENFVSEAVMEAQGSVLTNKYAEGYPGRRYYGGCEFVDVTESIAIDRAKALFGAEHVNVQPHSGSQANMAVYLVALEMGDTVLGMNLRHGGHLTHGAPVNFSGKFYNFVEYGVDKDTERINYDEVRKLALEHKPKLIVAGASAYSRTIDFKKFKEIADEVNAKLMVDMAHIAGLVAAGLHPNPVEYADFVTTTTHKTLRGPRGGMILCKEEYKKDIDKTIFPGIQGGPLEHVIAAKAVAFGEALENNFKTYQQQVVKNAKVLAEALINEGFRIVSGGTDNHLVAVDVKGSIGLTGKEAEETLDSVGITCNKNTIPFDQEKPFVTSGIRLGTPAATTRGFDEKAFEEVAKIISLALKNSKDEEKLQQAKERVAKLTAEYPLYQ.

Residues Leu117 and 121-123 (GHL) each bind (6S)-5,6,7,8-tetrahydrofolate. Position 226 is an N6-(pyridoxal phosphate)lysine (Lys226).

It belongs to the SHMT family. As to quaternary structure, homodimer. Pyridoxal 5'-phosphate is required as a cofactor.

It is found in the cytoplasm. The enzyme catalyses (6R)-5,10-methylene-5,6,7,8-tetrahydrofolate + glycine + H2O = (6S)-5,6,7,8-tetrahydrofolate + L-serine. The protein operates within one-carbon metabolism; tetrahydrofolate interconversion. It participates in amino-acid biosynthesis; glycine biosynthesis; glycine from L-serine: step 1/1. Its function is as follows. Catalyzes the reversible interconversion of serine and glycine with tetrahydrofolate (THF) serving as the one-carbon carrier. This reaction serves as the major source of one-carbon groups required for the biosynthesis of purines, thymidylate, methionine, and other important biomolecules. Also exhibits THF-independent aldolase activity toward beta-hydroxyamino acids, producing glycine and aldehydes, via a retro-aldol mechanism. This Staphylococcus aureus (strain bovine RF122 / ET3-1) protein is Serine hydroxymethyltransferase.